The chain runs to 651 residues: p-hydroxybenzoic acid efflux pump subunit AaeB (651 aa).

A run of 11 helical transmembrane segments spans residues 11 to 31 (FAFK…HLQL), 41 to 61 (AAIV…SGAI), 67 to 87 (LRII…VLTI), 91 to 111 (VLTL…SSLV), 119 to 139 (FGLA…TPLL), 150 to 170 (EIVL…PRSI), 368 to 388 (LFWL…IAVV), 405 to 425 (FLLG…FIIP), 429 to 449 (QSML…GIEV), 460 to 480 (LAST…VSLF), and 481 to 501 (LDSA…LLLI).

Belongs to the aromatic acid exporter ArAE (TC 2.A.85) family.

The protein resides in the cell inner membrane. Functionally, forms an efflux pump with AaeA. Could function as a metabolic relief valve, allowing to eliminate certain compounds when they accumulate to high levels in the cell. This chain is p-hydroxybenzoic acid efflux pump subunit AaeB, found in Yersinia enterocolitica serotype O:8 / biotype 1B (strain NCTC 13174 / 8081).